A 317-amino-acid polypeptide reads, in one-letter code: Tyrosine--tRNA ligase (317 aa).

Position 33 (Tyr33) interacts with L-tyrosine. The short motif at 38–46 (PSGKIHMGH) is the 'HIGH' region element. The L-tyrosine site is built by Tyr155, Gln159, Asp162, and Gln177. The 'KMSKS' region signature appears at 211-215 (KMASS). Ser214 contributes to the ATP binding site.

This sequence belongs to the class-I aminoacyl-tRNA synthetase family. TyrS type 3 subfamily. Homodimer.

Its subcellular location is the cytoplasm. It catalyses the reaction tRNA(Tyr) + L-tyrosine + ATP = L-tyrosyl-tRNA(Tyr) + AMP + diphosphate + H(+). Functionally, catalyzes the attachment of tyrosine to tRNA(Tyr) in a two-step reaction: tyrosine is first activated by ATP to form Tyr-AMP and then transferred to the acceptor end of tRNA(Tyr). This chain is Tyrosine--tRNA ligase, found in Methanosarcina mazei (strain ATCC BAA-159 / DSM 3647 / Goe1 / Go1 / JCM 11833 / OCM 88) (Methanosarcina frisia).